We begin with the raw amino-acid sequence, 535 residues long: Berberine bridge enzyme-like 3 (535 aa).

A signal peptide spans 1–19 (MKEALFGLYLVLLVSGLEA). Cys32 and Cys95 form a disulfide bridge. An N-linked (GlcNAc...) asparagine glycan is attached at Asn52. The FAD-binding PCMH-type domain maps to 73–247 (NNKNLLAIVV…LSWKINLVEV (175 aa)). Positions 110–172 (HDNEGLSYVS…QTLAFPAGIC (63 aa)) form a cross-link, 6-(S-cysteinyl)-8alpha-(pros-histidyl)-FAD (His-Cys). 8 N-linked (GlcNAc...) asparagine glycosylation sites follow: Asn214, Asn257, Asn292, Asn321, Asn341, Asn415, Asn439, and Asn444.

Belongs to the oxygen-dependent FAD-linked oxidoreductase family. The cofactor is FAD. The FAD cofactor is bound via a bicovalent 6-S-cysteinyl, 8alpha-N1-histidyl FAD linkage.

It localises to the endoplasmic reticulum. The protein localises to the cell membrane. Its subcellular location is the secreted. The protein resides in the cell wall. Its function is as follows. Flavin-dependent oxidoreductase involved in the biosynthetic pathway to 4-hydroxyindole-3-carbonyl nitrile (4-OH-ICN), a cyanogenic metabolite required for inducible pathogen defense. Converts indole cyanohydrin into indole-3-carbonyl nitrile (ICN). The chain is Berberine bridge enzyme-like 3 from Arabidopsis thaliana (Mouse-ear cress).